The primary structure comprises 548 residues: ATP synthase subunit alpha (548 aa).

172-179 (GDRKTGKT) contacts ATP. The tract at residues 526-548 (AEAMDEADVEKESVKVRKPAPKK) is disordered.

This sequence belongs to the ATPase alpha/beta chains family. As to quaternary structure, F-type ATPases have 2 components, CF(1) - the catalytic core - and CF(0) - the membrane proton channel. CF(1) has five subunits: alpha(3), beta(3), gamma(1), delta(1), epsilon(1). CF(0) has three main subunits: a(1), b(2) and c(9-12). The alpha and beta chains form an alternating ring which encloses part of the gamma chain. CF(1) is attached to CF(0) by a central stalk formed by the gamma and epsilon chains, while a peripheral stalk is formed by the delta and b chains.

The protein localises to the cell membrane. The enzyme catalyses ATP + H2O + 4 H(+)(in) = ADP + phosphate + 5 H(+)(out). Produces ATP from ADP in the presence of a proton gradient across the membrane. The alpha chain is a regulatory subunit. The chain is ATP synthase subunit alpha from Mycolicibacterium gilvum (strain PYR-GCK) (Mycobacterium gilvum (strain PYR-GCK)).